The sequence spans 321 residues: tRNA-dihydrouridine synthase B (321 aa).

Residues 16-18 (PMA) and Q70 contribute to the FMN site. C100 functions as the Proton donor in the catalytic mechanism. FMN-binding positions include K139, 200–202 (NGD), and 224–225 (GR).

The protein belongs to the Dus family. DusB subfamily. It depends on FMN as a cofactor.

The catalysed reaction is a 5,6-dihydrouridine in tRNA + NAD(+) = a uridine in tRNA + NADH + H(+). It catalyses the reaction a 5,6-dihydrouridine in tRNA + NADP(+) = a uridine in tRNA + NADPH + H(+). In terms of biological role, catalyzes the synthesis of 5,6-dihydrouridine (D), a modified base found in the D-loop of most tRNAs, via the reduction of the C5-C6 double bond in target uridines. The protein is tRNA-dihydrouridine synthase B of Escherichia coli O157:H7.